A 438-amino-acid chain; its full sequence is tRNA(Ile)-lysidine synthase (438 aa).

An ATP-binding site is contributed by 26-31; it reads SGGADS.

The protein belongs to the tRNA(Ile)-lysidine synthase family.

The protein localises to the cytoplasm. The catalysed reaction is cytidine(34) in tRNA(Ile2) + L-lysine + ATP = lysidine(34) in tRNA(Ile2) + AMP + diphosphate + H(+). Ligates lysine onto the cytidine present at position 34 of the AUA codon-specific tRNA(Ile) that contains the anticodon CAU, in an ATP-dependent manner. Cytidine is converted to lysidine, thus changing the amino acid specificity of the tRNA from methionine to isoleucine. This is tRNA(Ile)-lysidine synthase from Parabacteroides distasonis (strain ATCC 8503 / DSM 20701 / CIP 104284 / JCM 5825 / NCTC 11152).